A 73-amino-acid chain; its full sequence is Conotoxin Cl9.2 (73 aa).

Positions 1–18 (MSKLVILAVLVLLPLVTA) are cleaved as a signal peptide. A propeptide spanning residues 19-41 (EHGRDEQAMQPEKKTMWTLWSLT) is cleaved from the precursor. 3 disulfide bridges follow: cysteine 46–cysteine 61, cysteine 52–cysteine 63, and cysteine 58–cysteine 72.

In terms of tissue distribution, expressed by the venom duct.

The protein resides in the secreted. This Californiconus californicus (California cone) protein is Conotoxin Cl9.2.